The following is a 143-amino-acid chain: S-adenosylmethionine decarboxylase proenzyme (143 aa).

Catalysis depends on Ser66, which acts as the Schiff-base intermediate with substrate; via pyruvic acid. At Ser66 the chain carries Pyruvic acid (Ser); by autocatalysis. The Proton acceptor; for processing activity role is filled by His71. The active-site Proton donor; for catalytic activity is the Cys86.

This sequence belongs to the prokaryotic AdoMetDC family. Type 1 subfamily. As to quaternary structure, heterotetramer of two alpha and two beta chains arranged as a dimer of alpha/beta heterodimers. Pyruvate is required as a cofactor. In terms of processing, is synthesized initially as an inactive proenzyme. Formation of the active enzyme involves a self-maturation process in which the active site pyruvoyl group is generated from an internal serine residue via an autocatalytic post-translational modification. Two non-identical subunits are generated from the proenzyme in this reaction, and the pyruvate is formed at the N-terminus of the alpha chain, which is derived from the carboxyl end of the proenzyme. The post-translation cleavage follows an unusual pathway, termed non-hydrolytic serinolysis, in which the side chain hydroxyl group of the serine supplies its oxygen atom to form the C-terminus of the beta chain, while the remainder of the serine residue undergoes an oxidative deamination to produce ammonia and the pyruvoyl group blocking the N-terminus of the alpha chain.

The enzyme catalyses S-adenosyl-L-methionine + H(+) = S-adenosyl 3-(methylsulfanyl)propylamine + CO2. It functions in the pathway amine and polyamine biosynthesis; S-adenosylmethioninamine biosynthesis; S-adenosylmethioninamine from S-adenosyl-L-methionine: step 1/1. Its function is as follows. Catalyzes the decarboxylation of S-adenosylmethionine to S-adenosylmethioninamine (dcAdoMet), the propylamine donor required for the synthesis of the polyamines spermine and spermidine from the diamine putrescine. This chain is S-adenosylmethionine decarboxylase proenzyme, found in Thermococcus gammatolerans (strain DSM 15229 / JCM 11827 / EJ3).